A 93-amino-acid chain; its full sequence is Small ribosomal subunit protein bS20c (93 aa).

Belongs to the bacterial ribosomal protein bS20 family.

The protein resides in the plastid. It localises to the chloroplast. Binds directly to 16S ribosomal RNA. The polypeptide is Small ribosomal subunit protein bS20c (Thalassiosira pseudonana (Marine diatom)).